The following is an 86-amino-acid chain: Selenoprotein W (86 aa).

The segment at residues Cys10–Sec13 is a cross-link (cysteinyl-selenocysteine (Cys-Sec); redox-active). Sec13 is a non-standard amino acid (selenocysteine).

Belongs to the SelWTH family. Selenoprotein W subfamily.

The protein localises to the cytoplasm. Plays a role as a glutathione (GSH)-dependent antioxidant. May be involved in a redox-related process. May play a role in the myopathies of selenium deficiency. This is Selenoprotein W from Danio rerio (Zebrafish).